Consider the following 165-residue polypeptide: Lipoprotein signal peptidase (165 aa).

3 consecutive transmembrane segments (helical) span residues 9 to 29 (FLAISFFVLIDWVSKLAVLLY), 69 to 89 (KYFLFAIRIAIILGILAFLFL), and 98 to 118 (IRFSLILLCSGAIGNVGDILF). Residues D124 and D142 contribute to the active site. Residues 133-153 (WYFPTFNFADIFISLGTFIFV) form a helical membrane-spanning segment.

This sequence belongs to the peptidase A8 family.

The protein resides in the cell inner membrane. The catalysed reaction is Release of signal peptides from bacterial membrane prolipoproteins. Hydrolyzes -Xaa-Yaa-Zaa-|-(S,diacylglyceryl)Cys-, in which Xaa is hydrophobic (preferably Leu), and Yaa (Ala or Ser) and Zaa (Gly or Ala) have small, neutral side chains.. The protein operates within protein modification; lipoprotein biosynthesis (signal peptide cleavage). This protein specifically catalyzes the removal of signal peptides from prolipoproteins. The protein is Lipoprotein signal peptidase of Chlamydia caviae (strain ATCC VR-813 / DSM 19441 / 03DC25 / GPIC) (Chlamydophila caviae).